The primary structure comprises 338 residues: Tetraacyldisaccharide 4'-kinase (338 aa).

63 to 70 (TVGGAGKT) is a binding site for ATP.

Belongs to the LpxK family.

It carries out the reaction a lipid A disaccharide + ATP = a lipid IVA + ADP + H(+). The protein operates within glycolipid biosynthesis; lipid IV(A) biosynthesis; lipid IV(A) from (3R)-3-hydroxytetradecanoyl-[acyl-carrier-protein] and UDP-N-acetyl-alpha-D-glucosamine: step 6/6. Functionally, transfers the gamma-phosphate of ATP to the 4'-position of a tetraacyldisaccharide 1-phosphate intermediate (termed DS-1-P) to form tetraacyldisaccharide 1,4'-bis-phosphate (lipid IVA). This Hahella chejuensis (strain KCTC 2396) protein is Tetraacyldisaccharide 4'-kinase.